Reading from the N-terminus, the 529-residue chain is Na(+)/H(+) antiporter NhaB (529 aa).

12 helical membrane passes run 13-33 (FLGKAPDWYKVAIISFLIINP), 34-54 (IVFFFVDPFVAGWLLVVEFIF), 90-110 (LVANIEVLLLLVFMVAGIYFM), 113-133 (LLLFIFTKILLGIRSKAILSL), 149-166 (LTVIAVVISVAVGFYSIY), 205-225 (LLMHAGVGTALGGVTTMVGEP), 241-261 (FLIRMAPVTLPVFVCGLLTCF), 306-326 (GLIAVWLIVGLALHLAAVGLI), 327-347 (GLSVIILATAFTGVIEEHSLG), 351-371 (EEALPFTALLAVFFSIVAVII), 451-471 (ATPNGQAAFLFLLTSALAPLI), and 479-499 (VIMALPYTIVLALVGLFGIVF).

Belongs to the NhaB Na(+)/H(+) (TC 2.A.34) antiporter family.

It is found in the cell inner membrane. It catalyses the reaction 2 Na(+)(in) + 3 H(+)(out) = 2 Na(+)(out) + 3 H(+)(in). In terms of biological role, na(+)/H(+) antiporter that extrudes sodium in exchange for external protons. The polypeptide is Na(+)/H(+) antiporter NhaB (Vibrio vulnificus (strain YJ016)).